The following is a 320-amino-acid chain: Probable cell division protein WhiA (320 aa).

The H-T-H motif DNA-binding region spans 276 to 310; the sequence is TLKELGEMVAGGKISKSGINHRLRKIDEIAERLRA.

Belongs to the WhiA family.

In terms of biological role, involved in cell division and chromosome segregation. This is Probable cell division protein WhiA from Geobacillus thermodenitrificans (strain NG80-2).